Here is a 256-residue protein sequence, read N- to C-terminus: MSHVSICLLSEAGADPGALSILADRWGLVSDDQAVMALVLTAERLELRKRDEPKLGGIYVDFVSGTQAHRRKFGGGRGEAVAKAVGIKKGYLPRVVDATAGLGRDAFVLAALGCQVQMLERNPVVAALLDDGLRRGYLDAEIGPWLRERLTLLHASSLTALVAIEPRPEVVYLDPMYPHRQKSALVKKEMRVFQSLVGADNDADGLLAPARALATKRVVVKRPDYAEPLAGVAAQAAVVTKSHRFDIYPSSVTPPR.

Residues 104 to 105, 120 to 121, 156 to 157, and D174 each bind S-adenosyl-L-methionine; these read RD, ER, and SS.

This sequence belongs to the methyltransferase superfamily. RsmJ family.

Its subcellular location is the cytoplasm. The enzyme catalyses guanosine(1516) in 16S rRNA + S-adenosyl-L-methionine = N(2)-methylguanosine(1516) in 16S rRNA + S-adenosyl-L-homocysteine + H(+). Its function is as follows. Specifically methylates the guanosine in position 1516 of 16S rRNA. The protein is Ribosomal RNA small subunit methyltransferase J of Yersinia pseudotuberculosis serotype O:1b (strain IP 31758).